Here is a 936-residue protein sequence, read N- to C-terminus: Protein translocase subunit SecA (936 aa).

ATP contacts are provided by residues Gln-87, 105-109 (GEGKT), and Asp-515. Zn(2+) contacts are provided by Cys-920, Cys-922, Cys-931, and His-932.

The protein belongs to the SecA family. In terms of assembly, monomer and homodimer. Part of the essential Sec protein translocation apparatus which comprises SecA, SecYEG and auxiliary proteins SecDF-YajC and YidC. Zn(2+) is required as a cofactor.

It is found in the cell inner membrane. Its subcellular location is the cytoplasm. The catalysed reaction is ATP + H2O + cellular proteinSide 1 = ADP + phosphate + cellular proteinSide 2.. Functionally, part of the Sec protein translocase complex. Interacts with the SecYEG preprotein conducting channel. Has a central role in coupling the hydrolysis of ATP to the transfer of proteins into and across the cell membrane, serving both as a receptor for the preprotein-SecB complex and as an ATP-driven molecular motor driving the stepwise translocation of polypeptide chains across the membrane. The sequence is that of Protein translocase subunit SecA from Paraburkholderia phytofirmans (strain DSM 17436 / LMG 22146 / PsJN) (Burkholderia phytofirmans).